The following is a 271-amino-acid chain: Tryptophan synthase alpha chain (271 aa).

Active-site proton acceptor residues include glutamate 49 and aspartate 60.

The protein belongs to the TrpA family. As to quaternary structure, tetramer of two alpha and two beta chains.

It carries out the reaction (1S,2R)-1-C-(indol-3-yl)glycerol 3-phosphate + L-serine = D-glyceraldehyde 3-phosphate + L-tryptophan + H2O. Its pathway is amino-acid biosynthesis; L-tryptophan biosynthesis; L-tryptophan from chorismate: step 5/5. Functionally, the alpha subunit is responsible for the aldol cleavage of indoleglycerol phosphate to indole and glyceraldehyde 3-phosphate. This is Tryptophan synthase alpha chain from Burkholderia multivorans (strain ATCC 17616 / 249).